Consider the following 80-residue polypeptide: Large ribosomal subunit protein bL28 (80 aa).

Positions 1 to 21 are disordered; that stretch reads MSRICQITRKKSMKGNSVAHS.

Belongs to the bacterial ribosomal protein bL28 family.

The polypeptide is Large ribosomal subunit protein bL28 (Azobacteroides pseudotrichonymphae genomovar. CFP2).